The chain runs to 174 residues: Gamma-crystallin A (174 aa).

2 Beta/gamma crystallin 'Greek key' domains span residues 2–40 (GKIT…RVDS) and 41–83 (GCWM…RSIP). The tract at residues 84 to 87 (YTSS) is connecting peptide. Beta/gamma crystallin 'Greek key' domains follow at residues 88-128 (HRIR…HVLE) and 129-171 (GSWV…RRVM).

The protein belongs to the beta/gamma-crystallin family.

Its function is as follows. Crystallins are the dominant structural components of the vertebrate eye lens. The protein is Gamma-crystallin A (Cryga) of Rattus norvegicus (Rat).